A 249-amino-acid polypeptide reads, in one-letter code: Ubiquinone/menaquinone biosynthesis C-methyltransferase UbiE (249 aa).

S-adenosyl-L-methionine-binding positions include Thr-72, Asp-93, and 121–122; that span reads DA.

Belongs to the class I-like SAM-binding methyltransferase superfamily. MenG/UbiE family.

It catalyses the reaction a 2-demethylmenaquinol + S-adenosyl-L-methionine = a menaquinol + S-adenosyl-L-homocysteine + H(+). The catalysed reaction is a 2-methoxy-6-(all-trans-polyprenyl)benzene-1,4-diol + S-adenosyl-L-methionine = a 5-methoxy-2-methyl-3-(all-trans-polyprenyl)benzene-1,4-diol + S-adenosyl-L-homocysteine + H(+). Its pathway is quinol/quinone metabolism; menaquinone biosynthesis; menaquinol from 1,4-dihydroxy-2-naphthoate: step 2/2. It functions in the pathway cofactor biosynthesis; ubiquinone biosynthesis. In terms of biological role, methyltransferase required for the conversion of demethylmenaquinol (DMKH2) to menaquinol (MKH2) and the conversion of 2-polyprenyl-6-methoxy-1,4-benzoquinol (DDMQH2) to 2-polyprenyl-3-methyl-6-methoxy-1,4-benzoquinol (DMQH2). This is Ubiquinone/menaquinone biosynthesis C-methyltransferase UbiE from Saccharophagus degradans (strain 2-40 / ATCC 43961 / DSM 17024).